The primary structure comprises 306 residues: Aspartate carbamoyltransferase catalytic subunit (306 aa).

Arg-55 and Thr-56 together coordinate carbamoyl phosphate. Lys-84 serves as a coordination point for L-aspartate. 3 residues coordinate carbamoyl phosphate: Arg-105, His-133, and Gln-136. Arg-166 and Arg-227 together coordinate L-aspartate. Leu-265 and Pro-266 together coordinate carbamoyl phosphate.

This sequence belongs to the aspartate/ornithine carbamoyltransferase superfamily. ATCase family. Heterododecamer (2C3:3R2) of six catalytic PyrB chains organized as two trimers (C3), and six regulatory PyrI chains organized as three dimers (R2).

The catalysed reaction is carbamoyl phosphate + L-aspartate = N-carbamoyl-L-aspartate + phosphate + H(+). It functions in the pathway pyrimidine metabolism; UMP biosynthesis via de novo pathway; (S)-dihydroorotate from bicarbonate: step 2/3. In terms of biological role, catalyzes the condensation of carbamoyl phosphate and aspartate to form carbamoyl aspartate and inorganic phosphate, the committed step in the de novo pyrimidine nucleotide biosynthesis pathway. This is Aspartate carbamoyltransferase catalytic subunit from Neisseria gonorrhoeae (strain ATCC 700825 / FA 1090).